The chain runs to 360 residues: 3-isopropylmalate dehydrogenase (360 aa).

76-89 lines the NAD(+) pocket; sequence GPKWEPLDYSLRPE. Residues Arg96, Arg106, Arg134, and Asp224 each contribute to the substrate site. Mg(2+)-binding residues include Asp224, Asp248, and Asp252. 282 to 294 contributes to the NAD(+) binding site; that stretch reads GSAPDIAGRGIAN.

The protein belongs to the isocitrate and isopropylmalate dehydrogenases family. LeuB type 1 subfamily. Homodimer. Mg(2+) is required as a cofactor. The cofactor is Mn(2+).

The protein resides in the cytoplasm. It carries out the reaction (2R,3S)-3-isopropylmalate + NAD(+) = 4-methyl-2-oxopentanoate + CO2 + NADH. It functions in the pathway amino-acid biosynthesis; L-leucine biosynthesis; L-leucine from 3-methyl-2-oxobutanoate: step 3/4. Its function is as follows. Catalyzes the oxidation of 3-carboxy-2-hydroxy-4-methylpentanoate (3-isopropylmalate) to 3-carboxy-4-methyl-2-oxopentanoate. The product decarboxylates to 4-methyl-2 oxopentanoate. The protein is 3-isopropylmalate dehydrogenase of Methylococcus capsulatus (strain ATCC 33009 / NCIMB 11132 / Bath).